The chain runs to 358 residues: Chorismate synthase (358 aa).

NADP(+) contacts are provided by arginine 48 and arginine 54. Residues 125–127 (RSS), glycine 282, 297–301 (KPPAS), and arginine 323 each bind FMN.

It belongs to the chorismate synthase family. Homotetramer. FMNH2 is required as a cofactor.

It carries out the reaction 5-O-(1-carboxyvinyl)-3-phosphoshikimate = chorismate + phosphate. Its pathway is metabolic intermediate biosynthesis; chorismate biosynthesis; chorismate from D-erythrose 4-phosphate and phosphoenolpyruvate: step 7/7. Functionally, catalyzes the anti-1,4-elimination of the C-3 phosphate and the C-6 proR hydrogen from 5-enolpyruvylshikimate-3-phosphate (EPSP) to yield chorismate, which is the branch point compound that serves as the starting substrate for the three terminal pathways of aromatic amino acid biosynthesis. This reaction introduces a second double bond into the aromatic ring system. This is Chorismate synthase from Roseiflexus castenholzii (strain DSM 13941 / HLO8).